The sequence spans 159 residues: RNA pyrophosphohydrolase (159 aa).

The Nudix hydrolase domain maps to 6-149 (GFRPNVGIIL…KREVYRRALK (144 aa)). Positions 38 to 59 (GGINPDETPEDALYRELNEEVG) match the Nudix box motif.

The protein belongs to the Nudix hydrolase family. RppH subfamily. A divalent metal cation serves as cofactor.

Functionally, accelerates the degradation of transcripts by removing pyrophosphate from the 5'-end of triphosphorylated RNA, leading to a more labile monophosphorylated state that can stimulate subsequent ribonuclease cleavage. The sequence is that of RNA pyrophosphohydrolase from Pseudomonas putida (strain ATCC 700007 / DSM 6899 / JCM 31910 / BCRC 17059 / LMG 24140 / F1).